A 329-amino-acid polypeptide reads, in one-letter code: UDP-glucose 4-epimerase (329 aa).

NAD(+) is bound by residues 13-14, 33-38, 53-54, 76-80, Asn-95, Thr-120, Tyr-144, Lys-148, and Phe-172; these read YV, HNLSTG, DI, and FAAFS. Substrate contacts are provided by Thr-120 and Tyr-144. Tyr-144 serves as the catalytic Proton acceptor. Substrate contacts are provided by residues Asn-173, 190-191, 207-209, Arg-221, and 281-284; these read HL, SVY, and RGRD.

The protein belongs to the NAD(P)-dependent epimerase/dehydratase family. As to quaternary structure, homodimer. NAD(+) serves as cofactor.

The enzyme catalyses UDP-alpha-D-glucose = UDP-alpha-D-galactose. The protein operates within carbohydrate metabolism; galactose metabolism. Involved in the metabolism of galactose. Catalyzes the conversion of UDP-galactose (UDP-Gal) to UDP-glucose (UDP-Glc) through a mechanism involving the transient reduction of NAD. This chain is UDP-glucose 4-epimerase (galE), found in Streptomyces lividans.